The following is an 891-amino-acid chain: Microtubule-associated protein 10 (891 aa).

Disordered stretches follow at residues 325–355, 401–457, 504–679, and 702–844; these read AAVQ…PPQI, EDKG…VTKG, SWKG…KSSC, and TTEN…SNLS. Residues 407-417 are compositionally biased toward low complexity; sequence PSTKSTSPSES. Composition is skewed to polar residues over residues 509–520 and 527–544; these read VSSSAAESQMSP and PTDS…SQLP. Composition is skewed to basic and acidic residues over residues 577 to 592 and 645 to 658; these read STTK…KQEM and TVDK…DGRQ. 5 stretches are compositionally biased toward polar residues: residues 665–679, 702–718, 726–749, 776–790, and 826–844; these read ADTS…KSSC, TTEN…SSTG, SRAS…SSVL, EASS…SQWT, and KSQS…SNLS.

As to quaternary structure, interacts (via middle region) with microtubules.

Its subcellular location is the cytoplasm. The protein localises to the cytoskeleton. It localises to the spindle pole. It is found in the microtubule organizing center. The protein resides in the centrosome. Its subcellular location is the midbody. Microtubule-associated protein (MAP) that plays a role in the regulation of cell division; promotes microtubule stability and participates in the organization of the spindle midzone and normal progress of cytokinesis. In Mus musculus (Mouse), this protein is Microtubule-associated protein 10 (Map10).